The primary structure comprises 462 residues: Zinc finger CCCH domain-containing protein 8 (462 aa).

C3H1-type zinc fingers lie at residues 105-133 (RPGEKDCAFYMMTRTCKFGGSCKFDHPQW), 156-184 (QEGEPDCPFFMKTGKCKFGSKCKFNHPKE), 209-237 (RPSEPLCSFYAKTGKCKFRAMCKFNHPKD), 288-316 (RPGEVDCPFYMKMGSCKFGSTCRFNHPDR), 367-395 (RPGATVCDFYMKTGFCKFADRCKFHHPID), and 422-450 (REDAVVCAFYMKTGVCKFGMQCKFDHPPP).

In Oryza sativa subsp. japonica (Rice), this protein is Zinc finger CCCH domain-containing protein 8.